The primary structure comprises 313 residues: Formimidoylglutamase (313 aa).

Mn(2+)-binding residues include H130, D155, H157, D159, D241, and D243.

The protein belongs to the arginase family. Mn(2+) is required as a cofactor.

The enzyme catalyses N-formimidoyl-L-glutamate + H2O = formamide + L-glutamate. It functions in the pathway amino-acid degradation; L-histidine degradation into L-glutamate; L-glutamate from N-formimidoyl-L-glutamate (hydrolase route): step 1/1. Catalyzes the conversion of N-formimidoyl-L-glutamate to L-glutamate and formamide. The sequence is that of Formimidoylglutamase from Salmonella choleraesuis (strain SC-B67).